Here is a 108-residue protein sequence, read N- to C-terminus: Thioredoxin (108 aa).

The region spanning 2–108 (SDAILYVSDD…QLTAFLDSQL (107 aa)) is the Thioredoxin domain. Cysteines 33 and 36 form a disulfide.

It belongs to the thioredoxin family.

Component of the thioredoxin-thioredoxin reductase system. Participates in various redox reactions through the reversible oxidation of its active center dithiol to a disulfide and catalyzes dithiol-disulfide exchange reactions. This chain is Thioredoxin (trxA), found in Acidithiobacillus ferridurans.